Consider the following 77-residue polypeptide: Translational regulator CsrA (77 aa).

The segment at 58–77 (ANRRTAEETLDQASRLLSQK) is disordered. Residues 68 to 77 (DQASRLLSQK) are compositionally biased toward polar residues.

The protein belongs to the CsrA/RsmA family. Homodimer; the beta-strands of each monomer intercalate to form a hydrophobic core, while the alpha-helices form wings that extend away from the core.

The protein resides in the cytoplasm. In terms of biological role, a translational regulator that binds mRNA to regulate translation initiation and/or mRNA stability. Usually binds in the 5'-UTR at or near the Shine-Dalgarno sequence preventing ribosome-binding, thus repressing translation. Its main target seems to be the major flagellin gene, while its function is anatagonized by FliW. The sequence is that of Translational regulator CsrA from Magnetococcus marinus (strain ATCC BAA-1437 / JCM 17883 / MC-1).